We begin with the raw amino-acid sequence, 338 residues long: tRNA-specific 2-thiouridylase MnmA (338 aa).

Residues 6 to 13 and Met-32 each bind ATP; that span reads AMSGGVDS. Cys-92 acts as the Nucleophile in catalysis. A disulfide bond links Cys-92 and Cys-186. ATP is bound at residue Gly-116. The segment at 134–136 is interaction with tRNA; it reads KDQ. Residue Cys-186 is the Cysteine persulfide intermediate of the active site. Residues 288 to 289 form an interaction with tRNA region; it reads RY.

This sequence belongs to the MnmA/TRMU family.

It localises to the cytoplasm. It carries out the reaction S-sulfanyl-L-cysteinyl-[protein] + uridine(34) in tRNA + AH2 + ATP = 2-thiouridine(34) in tRNA + L-cysteinyl-[protein] + A + AMP + diphosphate + H(+). Catalyzes the 2-thiolation of uridine at the wobble position (U34) of tRNA, leading to the formation of s(2)U34. This Campylobacter lari (strain RM2100 / D67 / ATCC BAA-1060) protein is tRNA-specific 2-thiouridylase MnmA.